We begin with the raw amino-acid sequence, 441 residues long: uncharacterized protein (441 aa).

11 consecutive transmembrane segments (helical) span residues 68-88 (MAIA…GPFA), 110-130 (ALIA…PLLV), 131-151 (GALV…AALP), 164-184 (SVAI…MLLP), 194-214 (GASA…LWSL), 229-246 (AIHG…LHGA), 260-280 (SGLA…LLLV), 287-307 (AVGG…GAFL), 337-357 (VAAA…LGVA), 384-404 (VQDA…AALI), and 412-432 (VFVL…TIVG).

Belongs to the major facilitator superfamily.

The protein resides in the cell membrane. This is an uncharacterized protein from Mycobacterium tuberculosis (strain ATCC 25618 / H37Rv).